We begin with the raw amino-acid sequence, 460 residues long: Malonyl-coenzyme A:anthocyanin 3-O-glucoside-6''-O-malonyltransferase (460 aa).

Residues H173 and D400 each act as proton acceptor in the active site.

This sequence belongs to the plant acyltransferase family.

It carries out the reaction an anthocyanidin 3-O-beta-D-glucoside + malonyl-CoA = an anthocyanidin 3-O-(6-O-malonyl-beta-D-glucoside) + CoA. Its activity is regulated as follows. Completely inhibited by 5 mM N-ethylmaleimide or 0.1 mM Cu(2+). Partially inhibited by 0.1 mM Fe(2+) or 0.1 mM Hg(2+). Its function is as follows. Catalyzes the transfer of the malonyl group from malonyl-CoA to pelargonidin 3-O-glucoside to produce pelargonidin 3-O-6''-O-malonylglucoside. Can also transfer the malonyl group from malonyl-CoA to cyanidin 3-O-glucoside, delphinidin 3-O-glucoside and quercetin 3-O-glucoside. The polypeptide is Malonyl-coenzyme A:anthocyanin 3-O-glucoside-6''-O-malonyltransferase (Dahlia pinnata (Pinnate dahlia)).